Here is a 317-residue protein sequence, read N- to C-terminus: HTH-type transcriptional regulator MetR (317 aa).

The 59-residue stretch at 1 to 59 folds into the HTH lysR-type domain; that stretch reads MIEIKHLKTLQALRNSGSLAAAAAVLHQTQSALSHQFSDLEQRLGFRLFVRKSQPLRFT. The segment at residues 19–38 is a DNA-binding region (H-T-H motif); that stretch reads LAAAAAVLHQTQSALSHQFS.

It belongs to the LysR transcriptional regulatory family.

Its subcellular location is the cytoplasm. Its function is as follows. Control of the last step in methionine biosynthesis; MetR is a positive activator of the metA, metE and metH genes. It is also a negative regulator of its own expression. The polypeptide is HTH-type transcriptional regulator MetR (metR) (Salmonella typhi).